The sequence spans 154 residues: MGLSDGEWELVLKTWGKVEADIPGHGEFVLVRLFTGHPETLEKFDKFKHLKTEGEMKASEDLKKQGVTVLTALGGILKKKGHHEAEIQPLAQSHATKHKIPIKYLEFISDAIIHVLQSKHPAEFGADAQAAMKKALELFRNDIAAKYKELGFQG.

Residues 2 to 148 form the Globin domain; the sequence is GLSDGEWELV…FRNDIAAKYK (147 aa). At serine 4 the chain carries Phosphoserine. Position 68 is a phosphothreonine (threonine 68). Residue histidine 94 coordinates heme b.

This sequence belongs to the globin family. Monomeric.

It localises to the cytoplasm. The protein localises to the sarcoplasm. The enzyme catalyses Fe(III)-heme b-[protein] + nitric oxide + H2O = Fe(II)-heme b-[protein] + nitrite + 2 H(+). It catalyses the reaction H2O2 + AH2 = A + 2 H2O. Its function is as follows. Monomeric heme protein which primary function is to store oxygen and facilitate its diffusion within muscle tissues. Reversibly binds oxygen through a pentacoordinated heme iron and enables its timely and efficient release as needed during periods of heightened demand. Depending on the oxidative conditions of tissues and cells, and in addition to its ability to bind oxygen, it also has a nitrite reductase activity whereby it regulates the production of bioactive nitric oxide. Under stress conditions, like hypoxia and anoxia, it also protects cells against reactive oxygen species thanks to its pseudoperoxidase activity. This chain is Myoglobin (MB), found in Loxodonta africana (African elephant).